A 329-amino-acid polypeptide reads, in one-letter code: Phenylalanine--tRNA ligase alpha subunit (329 aa).

Glu-253 contacts Mg(2+).

It belongs to the class-II aminoacyl-tRNA synthetase family. Phe-tRNA synthetase alpha subunit type 1 subfamily. In terms of assembly, tetramer of two alpha and two beta subunits. Mg(2+) is required as a cofactor.

The protein resides in the cytoplasm. It catalyses the reaction tRNA(Phe) + L-phenylalanine + ATP = L-phenylalanyl-tRNA(Phe) + AMP + diphosphate + H(+). The chain is Phenylalanine--tRNA ligase alpha subunit from Coxiella burnetii (strain CbuK_Q154) (Coxiella burnetii (strain Q154)).